Consider the following 225-residue polypeptide: Recoverin family protein DDB_G0274781 (225 aa).

A compositionally biased stretch (low complexity) spans 1 to 13 (MGNKQGKSPNNSK). Residues 1-20 (MGNKQGKSPNNSKGGKKYKI) form a disordered region. G2 carries N-myristoyl glycine lipidation. EF-hand domains follow at residues 78–113 (DNSPFGDRLFDLLDTNKDNTVDLQEFISGLSILCKG), 114–149 (TAEEKLELSFKAYDIDGNGYITKSELSQMFQQAWIS), and 174–209 (MAQIFADGAFSSLDVNGDGKLSFNEFKQFAMSHPKI). D91, N93, D95, T97, E102, D127, D129, N131, Y133, E138, D187, N189, D191, K193, and E198 together coordinate Ca(2+).

Belongs to the recoverin family.

This is Recoverin family protein DDB_G0274781 from Dictyostelium discoideum (Social amoeba).